The sequence spans 150 residues: UPF0756 membrane protein Dd1591_2981 (150 aa).

4 helical membrane-spanning segments follow: residues 10–32 (ILLA…AILF), 51–71 (YGLS…IASG), 88–108 (LMAV…VVLM), and 127–147 (ALFR…SLLI).

This sequence belongs to the UPF0756 family.

The protein localises to the cell membrane. The sequence is that of UPF0756 membrane protein Dd1591_2981 from Dickeya chrysanthemi (strain Ech1591) (Dickeya zeae (strain Ech1591)).